Reading from the N-terminus, the 287-residue chain is Nuclease S1 (287 aa).

The first 20 residues, 1-20, serve as a signal peptide directing secretion; the sequence is MPRLLPISAATLALAQLTYG. A divalent metal cation-binding residues include Trp21, His26, Asp65, and His80. Residues 21 to 26, 65 to 71, 80 to 83, and 93 to 98 contribute to the substrate site; these read WGNLGH, DTYKYTD, HFID, and GVDYDR. Cystine bridges form between Cys92–Cys236 and Cys100–Cys105. 2 N-linked (GlcNAc...) asparagine glycosylation sites follow: Asn112 and Asn122. A divalent metal cation is bound by residues His135, Asp139, His145, His168, and Asp172. The substrate binding stretch occupies residues 135-183; the sequence is HIIGDIHQPLHDENLEAGGNGIDVTYDGETTNLHHIWDTNMPEEAAGGY. Asn248 carries an N-linked (GlcNAc...) asparagine glycan.

Belongs to the nuclease type I family. In terms of assembly, monomer. It depends on Zn(2+) as a cofactor.

It carries out the reaction Endonucleolytic cleavage to 5'-phosphomononucleotide and 5'-phosphooligonucleotide end-products.. Inhibited by inorganic phosphate (Pi). Functionally, hydrolyzes only single-stranded DNA and RNA without apparent specificity for bases. This chain is Nuclease S1, found in Aspergillus oryzae (strain ATCC 42149 / RIB 40) (Yellow koji mold).